We begin with the raw amino-acid sequence, 487 residues long: E3 ubiquitin-protein ligase RNF8 (487 aa).

Residues 38–92 form the FHA domain; sequence VTVGRGFGVTYQLVSKICPLMISRNHCILKQNAEGQWTIKDNKSLNGVWLNRERL. Positions 68–72 are required for interaction with PIWIL1; sequence QNAEG. 2 disordered regions span residues 143–176 and 182–201; these read MMEK…KSKI and EPGQ…QPSE. The residue at position 157 (serine 157) is a Phosphoserine. Residues 405 to 443 form an RING-type zinc finger; sequence CIICSEYFVEAVTLNCAHSFCSYCINEWMKRKVECPICR.

The protein belongs to the RNF8 family. As to quaternary structure, homodimer. Forms a E2-E3 ubiquitin ligase complex composed of the RNF8 homodimer and a E2 heterodimer of UBE2N and UBE2V2. Interacts with class III E2s, including UBE2E1, UBE2E2, and UBE2E3 and with UBE2N. Interacts with RXRA. Interacts (via FHA domain) with phosphorylated HERC2 (via C-terminus). Interacts with PIWIL1; leading to sequester RNF8 in the cytoplasm. Interacts with WRAP53/TCAB1. Post-translationally, autoubiquitinated through 'Lys-48' and 'Lys-63' of ubiquitin. 'Lys-63' polyubiquitination is mediated by UBE2N. 'Lys-29'-type polyubiquitination is also observed, but it doesn't require its own functional RING-type zinc finger.

The protein localises to the nucleus. Its subcellular location is the cytoplasm. It localises to the midbody. The protein resides in the chromosome. It is found in the telomere. It carries out the reaction S-ubiquitinyl-[E2 ubiquitin-conjugating enzyme]-L-cysteine + [acceptor protein]-L-lysine = [E2 ubiquitin-conjugating enzyme]-L-cysteine + N(6)-ubiquitinyl-[acceptor protein]-L-lysine.. The protein operates within protein modification; protein ubiquitination. E3 ubiquitin-protein ligase that plays a key role in DNA damage signaling via 2 distinct roles: by mediating the 'Lys-63'-linked ubiquitination of histones H2A and H2AX and promoting the recruitment of DNA repair proteins at double-strand breaks (DSBs) sites, and by catalyzing 'Lys-48'-linked ubiquitination to remove target proteins from DNA damage sites. Following DNA DSBs, it is recruited to the sites of damage by ATM-phosphorylated MDC1 and catalyzes the 'Lys-63'-linked ubiquitination of histones H2A and H2AX, thereby promoting the formation of TP53BP1 and BRCA1 ionizing radiation-induced foci (IRIF). Also controls the recruitment of UIMC1-BRCC3 (RAP80-BRCC36) and PAXIP1/PTIP to DNA damage sites. Promotes the recruitment of NBN to DNA damage sites by catalyzing 'Lys-6'-linked ubiquitination of NBN. Also recruited at DNA interstrand cross-links (ICLs) sites and catalyzes 'Lys-63'-linked ubiquitination of histones H2A and H2AX, leading to recruitment of FAAP20 and Fanconi anemia (FA) complex, followed by interstrand cross-link repair. H2A ubiquitination also mediates the ATM-dependent transcriptional silencing at regions flanking DSBs in cis, a mechanism to avoid collision between transcription and repair intermediates. Promotes the formation of 'Lys-63'-linked polyubiquitin chains via interactions with the specific ubiquitin-conjugating UBE2N/UBC13 and ubiquitinates non-histone substrates such as PCNA. Substrates that are polyubiquitinated at 'Lys-63' are usually not targeted for degradation. Also catalyzes the formation of 'Lys-48'-linked polyubiquitin chains via interaction with the ubiquitin-conjugating UBE2L6/UBCH8, leading to degradation of substrate proteins such as CHEK2, JMJD2A/KDM4A and KU80/XRCC5: it is still unclear how the preference toward 'Lys-48'- versus 'Lys-63'-linked ubiquitination is regulated but it could be due to RNF8 ability to interact with specific E2 specific ligases. For instance, interaction with phosphorylated HERC2 promotes the association between RNF8 and UBE2N/UBC13 and favors the specific formation of 'Lys-63'-linked ubiquitin chains. Promotes non-homologous end joining (NHEJ) by promoting the 'Lys-48'-linked ubiquitination and degradation the of KU80/XRCC5. Following DNA damage, mediates the ubiquitination and degradation of JMJD2A/KDM4A in collaboration with RNF168, leading to unmask H4K20me2 mark and promote the recruitment of TP53BP1 at DNA damage sites. Following DNA damage, mediates the ubiquitination and degradation of POLD4/p12, a subunit of DNA polymerase delta. In the absence of POLD4, DNA polymerase delta complex exhibits higher proofreading activity. In addition to its function in damage signaling, also plays a role in higher-order chromatin structure by mediating extensive chromatin decondensation. Involved in the activation of ATM by promoting histone H2B ubiquitination, which indirectly triggers histone H4 'Lys-16' acetylation (H4K16ac), establishing a chromatin environment that promotes efficient activation of ATM kinase. Required in the testis, where it plays a role in the replacement of histones during spermatogenesis. At uncapped telomeres, promotes the joining of deprotected chromosome ends by inducing H2A ubiquitination and TP53BP1 recruitment, suggesting that it may enhance cancer development by aggravating telomere-induced genome instability in case of telomeric crisis. Promotes the assembly of RAD51 at DNA DSBs in the absence of BRCA1 and TP53BP1 Also involved in class switch recombination in immune system, via its role in regulation of DSBs repair. May be required for proper exit from mitosis after spindle checkpoint activation and may regulate cytokinesis. May play a role in the regulation of RXRA-mediated transcriptional activity. Not involved in RXRA ubiquitination by UBE2E2. The sequence is that of E3 ubiquitin-protein ligase RNF8 from Bos taurus (Bovine).